The primary structure comprises 350 residues: Small ribosomal subunit biogenesis GTPase RsgA (350 aa).

Over residues 1–17 the composition is skewed to polar residues; the sequence is MSKNKLSKGQQRRVNAN. Residues 1 to 27 are disordered; sequence MSKNKLSKGQQRRVNANHQRRLKTSAE. The region spanning 104 to 273 is the CP-type G domain; the sequence is TSVLTRPDFY…VIDSPGVREF (170 aa). GTP is bound by residues 160–163 and 214–222; these read NKID and GQSGVGKSS. 4 residues coordinate Zn(2+): Cys-297, Cys-302, His-304, and Cys-310.

It belongs to the TRAFAC class YlqF/YawG GTPase family. RsgA subfamily. Monomer. Associates with 30S ribosomal subunit, binds 16S rRNA. Zn(2+) is required as a cofactor.

It localises to the cytoplasm. Functionally, one of several proteins that assist in the late maturation steps of the functional core of the 30S ribosomal subunit. Helps release RbfA from mature subunits. May play a role in the assembly of ribosomal proteins into the subunit. Circularly permuted GTPase that catalyzes slow GTP hydrolysis, GTPase activity is stimulated by the 30S ribosomal subunit. In Salmonella typhi, this protein is Small ribosomal subunit biogenesis GTPase RsgA.